A 518-amino-acid polypeptide reads, in one-letter code: ATP synthase subunit alpha (518 aa).

169–176 (GDRKTGKT) is an ATP binding site.

This sequence belongs to the ATPase alpha/beta chains family. In terms of assembly, F-type ATPases have 2 components, CF(1) - the catalytic core - and CF(0) - the membrane proton channel. CF(1) has five subunits: alpha(3), beta(3), gamma(1), delta(1), epsilon(1). CF(0) has three main subunits: a(1), b(2) and c(9-12). The alpha and beta chains form an alternating ring which encloses part of the gamma chain. CF(1) is attached to CF(0) by a central stalk formed by the gamma and epsilon chains, while a peripheral stalk is formed by the delta and b chains.

Its subcellular location is the cell membrane. The catalysed reaction is ATP + H2O + 4 H(+)(in) = ADP + phosphate + 5 H(+)(out). Produces ATP from ADP in the presence of a proton gradient across the membrane. The alpha chain is a regulatory subunit. The sequence is that of ATP synthase subunit alpha from Enterococcus faecalis (strain ATCC 700802 / V583).